The following is a 440-amino-acid chain: Transposon Ty1-PR3 Gag polyprotein (440 aa).

Composition is skewed to polar residues over residues 1–23 (MESQ…SVTS), 48–60 (TKAN…TPAS), and 127–152 (QSQF…GNTF). Disordered regions lie at residues 1–93 (MESQ…MMTQ), 126–173 (PQSQ…RPPP), and 352–440 (GSRN…PGTY). Residues 153–165 (TDSSSADSDMTST) are compositionally biased toward low complexity. Positions 299–401 (NNGIHINNKV…NSKSKTARAH (103 aa)) are RNA-binding. Low complexity predominate over residues 402 to 418 (NVSTSNNSPSTDNDSIS). Phosphoserine is present on S416. Residues 419–428 (KSTTEPIQLN) are compositionally biased toward polar residues. The span at 429–440 (NKHDLHLRPGTY) shows a compositional bias: basic and acidic residues.

In terms of assembly, homotrimer.

The protein localises to the cytoplasm. Functionally, capsid protein (CA) is the structural component of the virus-like particle (VLP), forming the shell that encapsulates the retrotransposons dimeric RNA genome. The particles are assembled from trimer-clustered units and there are holes in the capsid shells that allow for the diffusion of macromolecules. CA also has nucleocapsid-like chaperone activity, promoting primer tRNA(i)-Met annealing to the multipartite primer-binding site (PBS), dimerization of Ty1 RNA and initiation of reverse transcription. This chain is Transposon Ty1-PR3 Gag polyprotein (TY1A-PR3), found in Saccharomyces cerevisiae (strain ATCC 204508 / S288c) (Baker's yeast).